The sequence spans 507 residues: Dolichyl pyrophosphate Man9GlcNAc2 alpha-1,3-glucosyltransferase (507 aa).

Topologically, residues 1 to 2 (ME) are cytoplasmic. A helical membrane pass occupies residues 3–23 (SWPWMAVVVLLGLTVRWTVSL). Over 24-114 (SSYSGAGKPP…SQAHKLFMRA (91 aa)) the chain is Lumenal. N-linked (GlcNAc...) asparagine glycosylation is present at N59. Residues 115–135 (TVLAADLLIYVPAVLLYCYSL) traverse the membrane as a helical segment. At 136–143 (KEISPKRK) the chain is on the cytoplasmic side. A helical transmembrane segment spans residues 144 to 164 (IASALCILLYPGLILIDYGHF). Residues 165 to 172 (QYNSVSLG) lie on the Lumenal side of the membrane. A helical membrane pass occupies residues 173-193 (FALWGVLGVSWDWDLLGSLAF). The Cytoplasmic segment spans residues 194–229 (CLALNYKQMELYHSLPFFCFLLGKCFKKGLKGKGLA). Residues 230-250 (LFIRIACTVLASFLLCWLPFL) traverse the membrane as a helical segment. The Lumenal portion of the chain corresponds to 251-297 (TEREHALQVVRRLFPVDRGLFEDKVANIWCSVNVFLKIKDTLPRHIQ). The chain crosses the membrane as a helical span at residues 298–318 (IAISFCFTLLSLLPACIKLTV). The Cytoplasmic portion of the chain corresponds to 319-332 (RPSCKGFRFTLVSC). A helical transmembrane segment spans residues 333 to 353 (ALSFFLFSFQVHEKSILLVSL). The Lumenal segment spans residues 354–361 (PVCLVLTE). A helical transmembrane segment spans residues 362-382 (IPFMSTWFLLVSTFSMLPLLL). The Cytoplasmic portion of the chain corresponds to 383-385 (KDE). Residues 386–406 (LLLPSVVTVMAFVIACGTFFP) traverse the membrane as a helical segment. Topologically, residues 407–437 (MLENTSEEQLQLKSFAVSVRRHLPGFTFLPR) are lumenal. A helical transmembrane segment spans residues 438–458 (IMQCLFLSSVITMVLLTILSV). Topologically, residues 459 to 468 (TLDPPQKLPD) are cytoplasmic. The chain crosses the membrane as a helical span at residues 469–489 (LFPVLICFVSCVNFVFFLVYF). Topologically, residues 490 to 507 (NIVIMWDSKNGRNRKKIE) are lumenal.

It belongs to the ALG6/ALG8 glucosyltransferase family.

The protein localises to the endoplasmic reticulum membrane. The enzyme catalyses an alpha-D-Man-(1-&gt;2)-alpha-D-Man-(1-&gt;2)-alpha-D-Man-(1-&gt;3)-[alpha-D-Man-(1-&gt;2)-alpha-D-Man-(1-&gt;3)-[alpha-D-Man-(1-&gt;2)-alpha-D-Man-(1-&gt;6)]-alpha-D-Man-(1-&gt;6)]-beta-D-Man-(1-&gt;4)-beta-D-GlcNAc-(1-&gt;4)-alpha-D-GlcNAc-diphospho-di-trans,poly-cis-dolichol + a di-trans,poly-cis-dolichyl beta-D-glucosyl phosphate = an alpha-D-Glc-(1-&gt;3)-alpha-D-Man-(1-&gt;2)-alpha-D-Man-(1-&gt;2)-alpha-D-Man-(1-&gt;3)-[alpha-D-Man-(1-&gt;2)-alpha-D-Man-(1-&gt;3)-[alpha-D-Man-(1-&gt;2)-alpha-D-Man-(1-&gt;6)]-alpha-D-Man-(1-&gt;6)]-beta-D-Man-(1-&gt;4)-beta-D-GlcNAc-(1-&gt;4)-alpha-D-GlcNAc-diphospho-di-trans,poly-cis-dolichol + a di-trans,poly-cis-dolichyl phosphate + H(+). The protein operates within protein modification; protein glycosylation. Functionally, dolichyl pyrophosphate Man9GlcNAc2 alpha-1,3-glucosyltransferase that operates in the biosynthetic pathway of dolichol-linked oligosaccharides, the glycan precursors employed in protein asparagine (N)-glycosylation. The assembly of dolichol-linked oligosaccharides begins on the cytosolic side of the endoplasmic reticulum membrane and finishes in its lumen. The sequential addition of sugars to dolichol pyrophosphate produces dolichol-linked oligosaccharides containing fourteen sugars, including two GlcNAcs, nine mannoses and three glucoses. Once assembled, the oligosaccharide is transferred from the lipid to nascent proteins by oligosaccharyltransferases. In the lumen of the endoplasmic reticulum, adds the first glucose residue from dolichyl phosphate glucose (Dol-P-Glc) onto the lipid-linked oligosaccharide intermediate Man(9)GlcNAc(2)-PP-Dol to produce Glc(1)Man(9)GlcNAc(2)-PP-Dol. Glc(1)Man(9)GlcNAc(2)-PP-Dol is a substrate for ALG8, the following enzyme in the biosynthetic pathway. The protein is Dolichyl pyrophosphate Man9GlcNAc2 alpha-1,3-glucosyltransferase of Mus musculus (Mouse).